Consider the following 111-residue polypeptide: Colipase (111 aa).

Residues Met-1–Ala-17 form the signal peptide. A propeptide spans Ala-18–Arg-22 (enterostatin, activation peptide). 5 disulfide bridges follow: Cys-34–Cys-45, Cys-40–Cys-56, Cys-44–Cys-78, Cys-66–Cys-86, and Cys-80–Cys-104.

This sequence belongs to the colipase family. Forms a 1:1 stoichiometric complex with pancreatic lipase. As to expression, expressed by the pancreas.

It is found in the secreted. Functionally, colipase is a cofactor of pancreatic lipase. It allows the lipase to anchor itself to the lipid-water interface. Without colipase the enzyme is washed off by bile salts, which have an inhibitory effect on the lipase. Its function is as follows. Enterostatin has a biological activity as a satiety signal. The protein is Colipase (CLPS) of Myocastor coypus (Coypu).